A 268-amino-acid polypeptide reads, in one-letter code: 4-hydroxy-tetrahydrodipicolinate reductase (268 aa).

NAD(+)-binding positions include 10–15 (GASGRM), aspartate 36, 99–101 (GTT), and 123–126 (APNM). Residue histidine 156 is the Proton donor/acceptor of the active site. Residue histidine 157 coordinates (S)-2,3,4,5-tetrahydrodipicolinate. The active-site Proton donor is lysine 160. 166–167 (GT) contributes to the (S)-2,3,4,5-tetrahydrodipicolinate binding site.

It belongs to the DapB family.

The protein resides in the cytoplasm. It catalyses the reaction (S)-2,3,4,5-tetrahydrodipicolinate + NAD(+) + H2O = (2S,4S)-4-hydroxy-2,3,4,5-tetrahydrodipicolinate + NADH + H(+). The enzyme catalyses (S)-2,3,4,5-tetrahydrodipicolinate + NADP(+) + H2O = (2S,4S)-4-hydroxy-2,3,4,5-tetrahydrodipicolinate + NADPH + H(+). The protein operates within amino-acid biosynthesis; L-lysine biosynthesis via DAP pathway; (S)-tetrahydrodipicolinate from L-aspartate: step 4/4. In terms of biological role, catalyzes the conversion of 4-hydroxy-tetrahydrodipicolinate (HTPA) to tetrahydrodipicolinate. The polypeptide is 4-hydroxy-tetrahydrodipicolinate reductase (Janthinobacterium sp. (strain Marseille) (Minibacterium massiliensis)).